The sequence spans 464 residues: Argininosuccinate lyase (464 aa).

Belongs to the lyase 1 family. Argininosuccinate lyase subfamily.

The protein resides in the cytoplasm. The enzyme catalyses 2-(N(omega)-L-arginino)succinate = fumarate + L-arginine. It functions in the pathway amino-acid biosynthesis; L-arginine biosynthesis; L-arginine from L-ornithine and carbamoyl phosphate: step 3/3. This chain is Argininosuccinate lyase, found in Pseudomonas putida (strain GB-1).